Here is a 127-residue protein sequence, read N- to C-terminus: Large ribosomal subunit protein bL12 (127 aa).

Belongs to the bacterial ribosomal protein bL12 family. Homodimer. Part of the ribosomal stalk of the 50S ribosomal subunit. Forms a multimeric L10(L12)X complex, where L10 forms an elongated spine to which 2 to 4 L12 dimers bind in a sequential fashion. Binds GTP-bound translation factors.

In terms of biological role, forms part of the ribosomal stalk which helps the ribosome interact with GTP-bound translation factors. Is thus essential for accurate translation. The sequence is that of Large ribosomal subunit protein bL12 from Acidiphilium cryptum (strain JF-5).